The sequence spans 610 residues: UvrABC system protein C (610 aa).

Residues 19 to 97 form the GIY-YIG domain; it reads GAPGVYKMLD…IKRHKPRYNI (79 aa). A UVR domain is found at 207–242; that stretch reads EALIDRLAQRMEQAAQRLEFEKAARYRDQISNLRTV.

It belongs to the UvrC family. In terms of assembly, interacts with UvrB in an incision complex.

It localises to the cytoplasm. In terms of biological role, the UvrABC repair system catalyzes the recognition and processing of DNA lesions. UvrC both incises the 5' and 3' sides of the lesion. The N-terminal half is responsible for the 3' incision and the C-terminal half is responsible for the 5' incision. The protein is UvrABC system protein C of Methylococcus capsulatus (strain ATCC 33009 / NCIMB 11132 / Bath).